The following is a 271-amino-acid chain: RELT-like protein 1 (271 aa).

The N-terminal stretch at 1-23 (MAPRALPGSAVLAAAVFVGGAVS) is a signal peptide. At 24–57 (SPLVAPDNGSSRTLHSRTETTPSPSNDTGNGHPE) the chain is on the extracellular side. A disordered region spans residues 28–53 (APDNGSSRTLHSRTETTPSPSNDTGN). N-linked (GlcNAc...) asparagine glycosylation is found at N31 and N49. Residues 31–52 (NGSSRTLHSRTETTPSPSNDTG) show a composition bias toward polar residues. A helical transmembrane segment spans residues 58–78 (YIAYALVPVFFIMGLFGVLIC). The Cytoplasmic portion of the chain corresponds to 79-271 (HLLKKKGYRC…PVKRERSGTE (193 aa)). Residues 89-113 (TTEAEQDIEEEKVEKIELNDSVNEN) are a coiled coil. S109 and S114 each carry phosphoserine. Disordered regions lie at residues 145 to 173 (DPES…TPGK) and 233 to 271 (VEHK…SGTE). The segment covering 155–165 (PGSPPVSPGPL) has biased composition (pro residues). Residues 233 to 244 (VEHKSNQKERRS) show a composition bias toward basic and acidic residues. Phosphoserine occurs at positions 244 and 247.

Belongs to the RELT family. In terms of assembly, interacts with RELT, RELL2 and OXSR1. Interacts with PLSCR1. Phosphorylated in vitro by OXSR1. Widely expressed. Expressed at highest levels in the placenta, skeletal muscle, spleen and testis.

It is found in the cell membrane. In terms of biological role, induces activation of MAPK14/p38 cascade, when overexpressed. Induces apoptosis, when overexpressed. This chain is RELT-like protein 1 (RELL1), found in Homo sapiens (Human).